The chain runs to 358 residues: Protein-glutamate methylesterase/protein-glutamine glutaminase 1 (358 aa).

The Response regulatory domain occupies 8–125; that stretch reads RVLIVDDSAV…ARGLEGYAEE (118 aa). Position 59 is a 4-aspartylphosphate (D59). In terms of domain architecture, CheB-type methylesterase spans 157-352; the sequence is PVPGSALRFR…LERVAERLIA (196 aa). Residues S177, H203, and D299 contribute to the active site.

It belongs to the CheB family. In terms of processing, phosphorylated by CheA. Phosphorylation of the N-terminal regulatory domain activates the methylesterase activity.

The protein localises to the cytoplasm. It catalyses the reaction [protein]-L-glutamate 5-O-methyl ester + H2O = L-glutamyl-[protein] + methanol + H(+). The enzyme catalyses L-glutaminyl-[protein] + H2O = L-glutamyl-[protein] + NH4(+). Involved in chemotaxis. Part of a chemotaxis signal transduction system that modulates chemotaxis in response to various stimuli. Catalyzes the demethylation of specific methylglutamate residues introduced into the chemoreceptors (methyl-accepting chemotaxis proteins or MCP) by CheR. Also mediates the irreversible deamidation of specific glutamine residues to glutamic acid. This is Protein-glutamate methylesterase/protein-glutamine glutaminase 1 from Xanthomonas campestris pv. campestris (strain ATCC 33913 / DSM 3586 / NCPPB 528 / LMG 568 / P 25).